Consider the following 277-residue polypeptide: NADPH-dependent 7-cyano-7-deazaguanine reductase (277 aa).

83 to 85 serves as a coordination point for substrate; the sequence is VES. An NADPH-binding site is contributed by 85–86; sequence SK. Cys184 serves as the catalytic Thioimide intermediate. The active-site Proton donor is Asp191. Residue 223–224 participates in substrate binding; it reads HE. 252–253 serves as a coordination point for NADPH; sequence RG.

Belongs to the GTP cyclohydrolase I family. QueF type 2 subfamily. As to quaternary structure, homodimer.

Its subcellular location is the cytoplasm. The catalysed reaction is 7-aminomethyl-7-carbaguanine + 2 NADP(+) = 7-cyano-7-deazaguanine + 2 NADPH + 3 H(+). It participates in tRNA modification; tRNA-queuosine biosynthesis. Functionally, catalyzes the NADPH-dependent reduction of 7-cyano-7-deazaguanine (preQ0) to 7-aminomethyl-7-deazaguanine (preQ1). The sequence is that of NADPH-dependent 7-cyano-7-deazaguanine reductase from Ralstonia nicotianae (strain ATCC BAA-1114 / GMI1000) (Ralstonia solanacearum).